A 112-amino-acid polypeptide reads, in one-letter code: UstYa family oxidase VicYb (112 aa).

2 consecutive short sequence motifs (HXXHC) follow at residues 9–13 (HYLHC) and 36–40 (HLDHC).

This sequence belongs to the ustYa family.

The protein operates within mycotoxin biosynthesis. Its function is as follows. UstYa family oxidase, part of the gene cluster that mediates the biosynthesis of the secondary metabolite victorin, the molecular basis for Victoria blight of oats. Within the pathway, vicYb catalyzes the oxidative cyclization of the core peptide. The pathway starts with the processing of the precursor vicA1 by several endopeptidases including kexin proteases as well as the cluster-specific S28 family peptidases vicPa and vicPb to produce 7 identical copies of the hexapeptide Gly-Leu-Lys-Leu-Ala-Phe. After being excised from the precursor peptide, the core peptides are cyclized and modified post-translationally by enzymes encoded within the gene cluster. The ustYa family oxidase vicYb is required for the formation of the macrocycle in victorin and the copper amine oxidases (CAOs) vicK1 and vicK2 are responsible for converting victorin to the active form by oxidizing the N-terminal glycyl residue in the peptides to glyoxylate. Relaxed substrate specificity of enzymes in the victorin biosynthetic pathway results in a metabolic grid that produces a set of analogs including victorinines B, C, E or HV-toxin M. This is UstYa family oxidase VicYb from Bipolaris victoriae (strain FI3) (Victoria blight of oats agent).